Consider the following 319-residue polypeptide: Histone-lysine N-methyltransferase set5 (319 aa).

The SET domain maps to 4–141 (YETEIYKVVP…AGEEILTTYI (138 aa)). Ser-316 bears the Phosphoserine mark. Phosphothreonine is present on Thr-318.

Belongs to the class V-like SAM-binding methyltransferase superfamily.

It localises to the nucleus. The protein localises to the chromosome. Its subcellular location is the cytoplasm. It carries out the reaction L-lysyl-[histone] + S-adenosyl-L-methionine = N(6)-methyl-L-lysyl-[histone] + S-adenosyl-L-homocysteine + H(+). Its function is as follows. Histone methyltransferase that monomethylates 'Lys-5', 'Lys-8' and 'Lys-12' of histone H4 (H4K5me1, H4K8me1 and H4K12me1, respectively), thereby controlling gene expression and remodeling chromatin structures. Monomethylation of 'Lys-5' of histone H4 (H4K5me1) is required for subsequent acetylation and formation of N6-acetyl-N6-methyllysine (H4K5acme). The chain is Histone-lysine N-methyltransferase set5 (set5) from Schizosaccharomyces pombe (strain 972 / ATCC 24843) (Fission yeast).